Consider the following 316-residue polypeptide: MTSENSIHNALYLGFNRSQWAELRESVPLTLNEPELADLRGINEKLSLTEVTDIYLPLSRLLNLIVGAKQKRGLVLNEFLGRKPPKRPYIISIAGSVAVGKSTTARILQALLSQWPEHPRVDLVTTDGFLYPLAELKRRGLLQRKGFPESYDMKMLVEFISNVKAGNEHVKSPLYSHISYDRIKSDYQAIEQPDILIIEGLNVLQSGQDSAVGIQQPFVSDFVDFSIYVDAEEQLLKKWYIDRFLQFRGGAFSDEKSYFHHYSNLADNEAKTIAANIWDSINGPNLKLNIEPTRDRAHLILQKGYDHLMSQVLLRK.

ATP is bound at residue 95 to 102 (GSVAVGKS).

The protein belongs to the prokaryotic pantothenate kinase family.

Its subcellular location is the cytoplasm. It catalyses the reaction (R)-pantothenate + ATP = (R)-4'-phosphopantothenate + ADP + H(+). It functions in the pathway cofactor biosynthesis; coenzyme A biosynthesis; CoA from (R)-pantothenate: step 1/5. The sequence is that of Pantothenate kinase from Shewanella sediminis (strain HAW-EB3).